The chain runs to 616 residues: Chaperone protein HscA homolog (616 aa).

Belongs to the heat shock protein 70 family.

Its function is as follows. Chaperone involved in the maturation of iron-sulfur cluster-containing proteins. Has a low intrinsic ATPase activity which is markedly stimulated by HscB. This Histophilus somni (strain 2336) (Haemophilus somnus) protein is Chaperone protein HscA homolog.